We begin with the raw amino-acid sequence, 406 residues long: Phosphopentomutase (406 aa).

Residues Asp10, Asp305, His310, Asp346, His347, and His358 each contribute to the Mn(2+) site.

This sequence belongs to the phosphopentomutase family. Mn(2+) is required as a cofactor.

The protein resides in the cytoplasm. The catalysed reaction is 2-deoxy-alpha-D-ribose 1-phosphate = 2-deoxy-D-ribose 5-phosphate. The enzyme catalyses alpha-D-ribose 1-phosphate = D-ribose 5-phosphate. It participates in carbohydrate degradation; 2-deoxy-D-ribose 1-phosphate degradation; D-glyceraldehyde 3-phosphate and acetaldehyde from 2-deoxy-alpha-D-ribose 1-phosphate: step 1/2. In terms of biological role, isomerase that catalyzes the conversion of deoxy-ribose 1-phosphate (dRib-1-P) and ribose 1-phosphate (Rib-1-P) to deoxy-ribose 5-phosphate (dRib-5-P) and ribose 5-phosphate (Rib-5-P), respectively. This is Phosphopentomutase from Rhizobium etli (strain ATCC 51251 / DSM 11541 / JCM 21823 / NBRC 15573 / CFN 42).